Here is an 87-residue protein sequence, read N- to C-terminus: MSQAEFEKAAEEVKNLKTKPADDEMLFIYSHYKQATVGDINTERPGILDLKGKAKWDAWNGLKGTSKEDAMKAYINKVEELKKKYGI.

The residue at position 2 (S2) is an N-acetylserine. One can recognise an ACB domain in the interval S2–I87. Position 8 is an N6-acetyllysine; alternate (K8). The residue at position 8 (K8) is an N6-succinyllysine; alternate. K14 serves as a coordination point for an acyl-CoA. K17 bears the N6-succinyllysine mark. Position 19 is an N6-acetyllysine (K19). The residue at position 29 (Y29) is a Phosphotyrosine. An acyl-CoA is bound by residues Y29–K33, K51, K55, and Y74. Residue K51 is modified to N6-acetyllysine. At K55 the chain carries N6-acetyllysine; alternate. Residue K55 is modified to N6-succinyllysine; alternate. The residue at position 55 (K55) is an N6-(2-hydroxyisobutyryl)lysine; alternate. N6-malonyllysine; alternate is present on K55. The residue at position 77 (K77) is an N6-acetyllysine; alternate. An N6-succinyllysine; alternate modification is found at K77.

Belongs to the ACBP family. Monomer.

It localises to the endoplasmic reticulum. The protein localises to the golgi apparatus. Binds medium- and long-chain acyl-CoA esters with very high affinity and may function as an intracellular carrier of acyl-CoA esters. It is also able to displace diazepam from the benzodiazepine (BZD) recognition site located on the GABA type A receptor. It is therefore possible that this protein also acts as a neuropeptide to modulate the action of the GABA receptor. Its function is as follows. DBI(32-86) has antibacterial properties. The polypeptide is Acyl-CoA-binding protein (DBI) (Sus scrofa (Pig)).